The chain runs to 1158 residues: Serine/threonine/tyrosine-interacting-like protein 2 (1158 aa).

Disordered stretches follow at residues Met1 to Asn21, Glu280 to Ser303, Glu315 to Lys337, Leu360 to Ile392, Gly407 to Ser444, Ser492 to Ala527, Lys559 to Ser582, Gln597 to Lys622, Lys873 to Leu915, and Ser940 to Glu1135. A compositionally biased stretch (acidic residues) spans Glu8–Glu19. The 149-residue stretch at Asn132–Glu280 folds into the Tyrosine-protein phosphatase domain. Positions Ser322–Lys337 are enriched in polar residues. The residue at position 377 (Ser377) is a Phosphoserine. A Phosphothreonine modification is found at Thr433. Residues Ser435–Ser444 show a composition bias toward low complexity. Positions Lys500–Glu517 are enriched in basic and acidic residues. Ser509 carries the post-translational modification Phosphoserine. Positions Val600 to Leu619 are enriched in basic and acidic residues. Over residues Asp877–Asp890 the composition is skewed to acidic residues. Polar residues-rich tracts occupy residues Arg897–Ser914 and Ser952–Ser966. Residues Lys974–Ser983 show a composition bias toward low complexity. Ser985 is subject to Phosphoserine. Residues Thr990–Asn999 are compositionally biased toward polar residues. Low complexity predominate over residues Ser1000–Thr1012. Ser1036 is subject to Phosphoserine. Basic and acidic residues-rich tracts occupy residues Arg1044 to Glu1056, Arg1064 to Phe1079, and Arg1094 to Arg1111. Residues Arg1126–Glu1135 show a composition bias toward acidic residues.

This sequence belongs to the protein-tyrosine phosphatase family. Non-receptor class dual specificity subfamily.

The protein localises to the cytoplasm. It localises to the myofibril. The protein resides in the sarcomere. Its function is as follows. May be required for myofiber maturation. This Homo sapiens (Human) protein is Serine/threonine/tyrosine-interacting-like protein 2.